Here is a 185-residue protein sequence, read N- to C-terminus: Large ribosomal subunit protein bL25 (185 aa).

The protein belongs to the bacterial ribosomal protein bL25 family. CTC subfamily. In terms of assembly, part of the 50S ribosomal subunit; part of the 5S rRNA/L5/L18/L25 subcomplex. Contacts the 5S rRNA. Binds to the 5S rRNA independently of L5 and L18.

This is one of the proteins that binds to the 5S RNA in the ribosome where it forms part of the central protuberance. The polypeptide is Large ribosomal subunit protein bL25 (Chlamydia pneumoniae (Chlamydophila pneumoniae)).